The following is a 267-amino-acid chain: uncharacterized protein (267 aa).

The protein belongs to the glycosyltransferase 2 family.

This is an uncharacterized protein from Haemophilus influenzae (strain ATCC 51907 / DSM 11121 / KW20 / Rd).